Here is a 708-residue protein sequence, read N- to C-terminus: Capsid scaffolding protein (708 aa).

Active-site charge relay system residues include histidine 63, serine 132, and histidine 157. 3 disordered regions span residues 269 to 339 (ASAE…MSHP), 455 to 565 (HPSY…QQQR), and 593 to 619 (ALPSAASSSPTTTTVCTPTGELTSGGG). Low complexity predominate over residues 284 to 293 (PAAGARVPSS). Pro residues predominate over residues 294 to 311 (SPSPPVEPPSPVQPPALP). A compositionally biased stretch (low complexity) spans 326-339 (SPSEPAEAASMSHP). Residues 333-352 (AASMSHPLSAAVPAATAPPG) are interaction with pAP. Residues 498–513 (KQHRHGGSGGHNKRRK) show a composition bias toward basic residues. 2 short sequence motifs (nuclear localization signal) span residues 510-515 (KRRKET) and 537-543 (RARKRLK). Residues 593–611 (ALPSAASSSPTTTTVCTPT) show a composition bias toward low complexity. The segment at 688–708 (PPKDMVDLNRRIFVAALNKLE) is interaction with major capsid protein.

This sequence belongs to the herpesviridae capsid scaffolding protein family. In terms of assembly, homomultimer. Interacts with major capsid protein. As to quaternary structure, exists in a monomer-dimer equilibrium with the dimer being the active species. Capsid scaffolding protein is cleaved by assemblin after formation of the spherical procapsid. As a result, the capsid obtains its mature, icosahedral shape. Cleavages occur at two or more sites: release (R-site) and maturation (M-site).

It localises to the host cytoplasm. Its subcellular location is the host nucleus. It carries out the reaction Cleaves -Ala-|-Ser- and -Ala-|-Ala- bonds in the scaffold protein.. Functionally, acts as a scaffold protein by binding major capsid protein in the cytoplasm, inducing the nuclear localization of both proteins. Multimerizes in the nucleus such as major capsid protein forms the icosahedral T=16 capsid. Autocatalytic cleavage releases the assembly protein, and subsequently abolishes interaction with major capsid protein. Cleavages products are evicted from the capsid before or during DNA packaging. Protease that plays an essential role in virion assembly within the nucleus. Catalyzes the cleavage of the assembly protein after formation of the spherical procapsid. By that cleavage, the capsid matures and gains its icosahedral shape. The cleavage sites seem to include -Ala-Ser-, -Ala-Ala-, as well as Ala-Thr bonds. Assemblin and cleavages products are evicted from the capsid before or during DNA packaging. Its function is as follows. Plays a major role in capsid assembly. Acts as a scaffold protein by binding major capsid protein. Multimerizes in the nucleus such as major capsid protein forms the icosahedral T=16 capsid. Cleaved by assemblin after capsid completion. The cleavages products are evicted from the capsid before or during DNA packaging. The polypeptide is Capsid scaffolding protein (UL80) (Homo sapiens (Human)).